The sequence spans 224 residues: Probable C-&gt;U-editing enzyme APOBEC-2 (224 aa).

Positions 1-25 (MAQKEEAAAATEAASQNGEDLENLD) are disordered. Positions 60 and 98 each coordinate Zn(2+). The 106-residue stretch at 64 to 169 (GRNKTFLCYV…LEIQDALKKL (106 aa)) folds into the CMP/dCMP-type deaminase domain. Glu100 functions as the Proton donor in the catalytic mechanism. Zn(2+) contacts are provided by Cys128 and Cys131.

This sequence belongs to the cytidine and deoxycytidylate deaminase family. In terms of assembly, homotetramer. The cofactor is Zn(2+).

The enzyme catalyses cytidine(6666) in apoB mRNA + H2O + H(+) = uridine(6666) in apoB mRNA + NH4(+). Its function is as follows. Probable C to U editing enzyme whose physiological substrate is not yet known. Does not display detectable apoB mRNA editing. Has a low intrinsic cytidine deaminase activity. May play a role in the epigenetic regulation of gene expression through the process of active DNA demethylation. The polypeptide is Probable C-&gt;U-editing enzyme APOBEC-2 (APOBEC2) (Pongo pygmaeus (Bornean orangutan)).